The primary structure comprises 117 residues: Gamma-aminobutyric acid receptor-associated protein-like 2 (117 aa).

The residue at position 24 (Lys24) is an N6-acetyllysine. Phosphoserine is present on residues Ser39, Ser87, and Ser88. Residue Gly116 is the site of Phosphatidylethanolamine amidated glycine; alternate attachment. Gly116 carries the Phosphatidylserine amidated glycine; alternate lipid modification. Residue Phe117 is a propeptide, removed in mature form.

Belongs to the ATG8 family. Monomer. Interacts with ATG3, ATG7, ATG13 and ULK1. Interacts with TP53INP1 and TP53INP2. Interacts with TBC1D25. Directly interacts with SQSTM1 and BNIP3. Interacts with TECPR2 and PCM1. Interacts with TBC1D5. Interacts with TRIM5. Interacts with MEFV and TRIM21. Interacts with WDFY3. Interacts with UBA5; promoting recruitment of UBA5 to the endoplasmic reticulum membrane. Interacts with GOSR1. Interacts with KBTBD6 and KBTBD7; the interaction is direct. Interacts with reticulophagy regulators RETREG1, RETREG2 and RETREG3. Interacts with IRGM. Interacts with DNM2. Interacts with NCOA4. Interacts with IRGQ. In terms of processing, the precursor molecule is cleaved by ATG4 (ATG4A, ATG4B, ATG4C or ATG4D) to expose the glycine at the C-terminus and form the cytosolic form, GABARAPL2-I. The processed form is then activated by APG7L/ATG7, transferred to ATG3 and conjugated to phosphatidylethanolamine (PE) phospholipid to form the membrane-bound form, GABARAPL2-II. During non-canonical autophagy, the processed form is conjugated to phosphatidylserine (PS) phospholipid. ATG4 proteins also mediate the delipidation of PE-conjugated forms required for GABARAPL2 recycling when autophagosomes fuse with lysosomes. In addition, ATG4B and ATG4D mediate delipidation of ATG8 proteins conjugated to PS during non-canonical autophagy. ATG4B constitutes the major protein for proteolytic activation. ATG4D is the main enzyme for delipidation activity. Post-translationally, phosphorylation at Ser-87 and Ser-88 by TBK1 prevents interaction with ATG4 (ATG4A, ATG4B, ATG4C or ATG4D). Phosphorylation by TBK1 on autophagosomes prevents their delipidation by ATG4 and premature removal from nascent autophagosomes. In terms of tissue distribution, ubiquitous. Expressed at high levels in the brain, heart, prostate, ovary, spleen and skeletal muscle. Expressed at very low levels in lung, thymus and small intestine.

It localises to the cytoplasmic vesicle. The protein localises to the autophagosome. The protein resides in the endoplasmic reticulum membrane. Its subcellular location is the golgi apparatus. Functionally, ubiquitin-like modifier involved in intra-Golgi traffic. Modulates intra-Golgi transport through coupling between NSF activity and SNAREs activation. It first stimulates the ATPase activity of NSF which in turn stimulates the association with GOSR1. Involved in autophagy. Plays a role in mitophagy which contributes to regulate mitochondrial quantity and quality by eliminating the mitochondria to a basal level to fulfill cellular energy requirements and preventing excess ROS production. Whereas LC3s are involved in elongation of the phagophore membrane, the GABARAP/GATE-16 subfamily is essential for a later stage in autophagosome maturation. This Bos taurus (Bovine) protein is Gamma-aminobutyric acid receptor-associated protein-like 2.